The primary structure comprises 370 residues: Putative glutamate--cysteine ligase 2 (370 aa).

The protein belongs to the glutamate--cysteine ligase type 2 family. YbdK subfamily.

It carries out the reaction L-cysteine + L-glutamate + ATP = gamma-L-glutamyl-L-cysteine + ADP + phosphate + H(+). Functionally, ATP-dependent carboxylate-amine ligase which exhibits weak glutamate--cysteine ligase activity. The protein is Putative glutamate--cysteine ligase 2 of Herminiimonas arsenicoxydans.